The sequence spans 181 residues: NADH-quinone oxidoreductase subunit I (181 aa).

2 4Fe-4S ferredoxin-type domains span residues 52 to 81 (TRDSAGHERCVACNLCAVSCPVGCISLKKS) and 91 to 120 (EFFRINFSRCIFCGMCEEACPTAAIQLISD). The [4Fe-4S] cluster site is built by C61, C64, C67, C71, C100, C103, C106, and C110.

It belongs to the complex I 23 kDa subunit family. In terms of assembly, NDH-1 is composed of 13 different subunits. Subunits NuoA, H, J, K, L, M, N constitute the membrane sector of the complex. [4Fe-4S] cluster serves as cofactor.

The protein resides in the cell inner membrane. It carries out the reaction a quinone + NADH + 5 H(+)(in) = a quinol + NAD(+) + 4 H(+)(out). Functionally, NDH-1 shuttles electrons from NADH, via FMN and iron-sulfur (Fe-S) centers, to quinones in the respiratory chain. The immediate electron acceptor for the enzyme in this species is believed to be ubiquinone. Couples the redox reaction to proton translocation (for every two electrons transferred, four hydrogen ions are translocated across the cytoplasmic membrane), and thus conserves the redox energy in a proton gradient. This Blochmanniella floridana protein is NADH-quinone oxidoreductase subunit I.